The following is a 208-amino-acid chain: ATP phosphoribosyltransferase (208 aa).

Belongs to the ATP phosphoribosyltransferase family. Short subfamily. In terms of assembly, heteromultimer composed of HisG and HisZ subunits.

The protein localises to the cytoplasm. The catalysed reaction is 1-(5-phospho-beta-D-ribosyl)-ATP + diphosphate = 5-phospho-alpha-D-ribose 1-diphosphate + ATP. Its pathway is amino-acid biosynthesis; L-histidine biosynthesis; L-histidine from 5-phospho-alpha-D-ribose 1-diphosphate: step 1/9. Its function is as follows. Catalyzes the condensation of ATP and 5-phosphoribose 1-diphosphate to form N'-(5'-phosphoribosyl)-ATP (PR-ATP). Has a crucial role in the pathway because the rate of histidine biosynthesis seems to be controlled primarily by regulation of HisG enzymatic activity. This chain is ATP phosphoribosyltransferase, found in Hydrogenovibrio crunogenus (strain DSM 25203 / XCL-2) (Thiomicrospira crunogena).